The following is a 378-amino-acid chain: Erythronate-4-phosphate dehydrogenase (378 aa).

Substrate-binding residues include Ser45 and Thr67. Residue Asp147 coordinates NAD(+). Residue Arg209 is part of the active site. Asp233 contributes to the NAD(+) binding site. Residue Glu238 is part of the active site. The Proton donor role is filled by His255. Position 258 (Gly258) interacts with NAD(+). Substrate is bound at residue Tyr259.

It belongs to the D-isomer specific 2-hydroxyacid dehydrogenase family. PdxB subfamily. Homodimer.

Its subcellular location is the cytoplasm. The catalysed reaction is 4-phospho-D-erythronate + NAD(+) = (R)-3-hydroxy-2-oxo-4-phosphooxybutanoate + NADH + H(+). It participates in cofactor biosynthesis; pyridoxine 5'-phosphate biosynthesis; pyridoxine 5'-phosphate from D-erythrose 4-phosphate: step 2/5. In terms of biological role, catalyzes the oxidation of erythronate-4-phosphate to 3-hydroxy-2-oxo-4-phosphonooxybutanoate. In Shewanella denitrificans (strain OS217 / ATCC BAA-1090 / DSM 15013), this protein is Erythronate-4-phosphate dehydrogenase.